A 625-amino-acid polypeptide reads, in one-letter code: Baeyer-Villiger monooxygenase ATR8 (625 aa).

FAD-binding positions include D112, 120 to 123 (TWYW), D132, and Y138. Residue 130 to 132 (QCD) coordinates NADP(+). NADP(+) is bound by residues 266–272 (TGATAIQ), 289–290 (RT), and 405–406 (KR).

This sequence belongs to the FAD-binding monooxygenase family. Requires FAD as cofactor.

The protein operates within mycotoxin biosynthesis. Functionally, baeyer-Villiger monooxygenase; part of the core atranone cluster (CAC) which products are predicted to catalyze most or all steps of mycotoxin atranone synthesis, starting from geranylgeranyl pyrophosphate (GGPP). The initial cyclization of GGPP to dolabellane is probably performed by the terpene cyclase ATR13. The Baeyer-Villiger oxidation near the end of the atranone synthesis, which converts atranones D and E to atranones F and G is predicted to be catalyzed by the monooxygenase ATR8. Of the CAC's other predicted gene products, the reducing PKS ATR6 might synthesize a polyketide chain. This polyketide is probably transferred onto the atranone backbone by the polyketide transferase ATR5. Other predicted CAC products include 4 oxygenases (ATR2, ATR3, ATR4, and ATR14), 3 short-chain reductases (ATR7, ATR9, and ATR10), and a methyltransferase (ATR12). These may all be involved in the various steps of atranone biosynthesis, although their specific roles must await experimental determination. This Stachybotrys chlorohalonatus (strain IBT 40285) protein is Baeyer-Villiger monooxygenase ATR8.